Consider the following 54-residue polypeptide: Ovomucoid (54 aa).

The Kazal-like domain occupies 4–54 (VDCSDYPKPVCSLEYMPLCGSDSKTYSNKCDFCNAFVDSNGTLSLSHFGKC). Intrachain disulfides connect cysteine 6–cysteine 36, cysteine 14–cysteine 33, and cysteine 22–cysteine 54. N-linked (GlcNAc...) asparagine glycosylation occurs at asparagine 43.

Its subcellular location is the secreted. The polypeptide is Ovomucoid (Circus aeruginosus (Western marsh harrier)).